The primary structure comprises 454 residues: Glutaredoxin domain-containing cysteine-rich protein CG31559 (454 aa).

Disordered regions lie at residues glutamate 30–lysine 88 and arginine 217–serine 239. The segment covering aspartate 33–leucine 45 has biased composition (polar residues). Positions serine 58–serine 69 are enriched in low complexity. The segment covering threonine 70–arginine 84 has biased composition (polar residues). Over residues arginine 217 to histidine 227 the composition is skewed to basic and acidic residues. Residues asparagine 295–alanine 400 enclose the Glutaredoxin domain.

Belongs to the GRXCR1 family.

The sequence is that of Glutaredoxin domain-containing cysteine-rich protein CG31559 from Drosophila melanogaster (Fruit fly).